The chain runs to 66 residues: Large ribosomal subunit protein bL33c (66 aa).

This sequence belongs to the bacterial ribosomal protein bL33 family.

The protein localises to the plastid. The protein resides in the chloroplast. The chain is Large ribosomal subunit protein bL33c from Crucihimalaya wallichii (Rock-cress).